An 896-amino-acid polypeptide reads, in one-letter code: Trehalose-phosphatase (896 aa).

The segment at 1–554 is glycosyltransferase; sequence MTTTAQDNSP…SNDDMERKMT (554 aa).

It in the N-terminal section; belongs to the glycosyltransferase 20 family. This sequence in the C-terminal section; belongs to the trehalose phosphatase family. As to quaternary structure, the trehalose synthase complex is composed of the two catalytic subunits TPS1 and TPS2, and at least one of the two regulatory subunits TPS3 or TSL1. Requires Mg(2+) as cofactor.

It localises to the cytoplasm. The enzyme catalyses alpha,alpha-trehalose 6-phosphate + H2O = alpha,alpha-trehalose + phosphate. Its pathway is carbohydrate biosynthesis. With respect to regulation, inhibited by EDTA. In terms of biological role, phosphatase catalytic subunit of the trehalose synthase complex that catalyzes the production of trehalose from glucose-6-phosphate and UDP-alpha-D-glucose in a two step process. The chain is Trehalose-phosphatase from Saccharomyces cerevisiae (strain ATCC 204508 / S288c) (Baker's yeast).